A 95-amino-acid polypeptide reads, in one-letter code: Small ribosomal subunit protein bS6 (95 aa).

Belongs to the bacterial ribosomal protein bS6 family.

Its function is as follows. Binds together with bS18 to 16S ribosomal RNA. This Thermoanaerobacter pseudethanolicus (strain ATCC 33223 / 39E) (Clostridium thermohydrosulfuricum) protein is Small ribosomal subunit protein bS6.